We begin with the raw amino-acid sequence, 477 residues long: Stromelysin-1 (477 aa).

The first 17 residues, 1–17 (MKGLPVLLWLCVVVCSS), serve as a signal peptide directing secretion. Residues 18-99 (YPLHDSARDD…PRCGVPDVGG (82 aa)) constitute a propeptide, activation peptide. The Cysteine switch motif lies at 90–97 (PRCGVPDV). Zn(2+) is bound at residue Cys92. Ca(2+) contacts are provided by Asp124 and Asp158. Zn(2+) contacts are provided by His168 and Asp170. Residues Asp175, Gly176, Gly178, and Val180 each coordinate Ca(2+). His183 contributes to the Zn(2+) binding site. Ca(2+)-binding residues include Gly190, Asn192, and Asp194. Zn(2+) is bound at residue His196. Residues Asp198, Asp199, and Glu201 each coordinate Ca(2+). His218 contacts Zn(2+). The active site involves Glu219. Zn(2+) is bound by residues His222 and His228. Hemopexin repeat units follow at residues 287–336 (SPMC…WPSL), 337–383 (PSNM…GLPA), 385–433 (VKKI…FPGV), and 434–477 (DSRV…WFNC). Cys290 and Cys477 are oxidised to a cystine. Residue Asp297 participates in Ca(2+) binding. 2 residues coordinate Ca(2+): Asp389 and Asp438.

The protein belongs to the peptidase M10A family. Requires Ca(2+) as cofactor. Zn(2+) is required as a cofactor.

Its subcellular location is the secreted. The protein localises to the extracellular space. The protein resides in the extracellular matrix. It catalyses the reaction Preferential cleavage where P1', P2' and P3' are hydrophobic residues.. In terms of biological role, metalloproteinase with a rather broad substrate specificity that can degrade fibronectin, laminin, gelatins of type I, III, IV, and V; collagens III, IV, X, and IX, and cartilage proteoglycans. Activates different molecules including growth factors, plasminogen or other matrix metalloproteinases such as MMP9. Once released into the extracellular matrix (ECM), the inactive pro-enzyme is activated by the plasmin cascade signaling pathway. Also acts intracellularly. For example, in dopaminergic neurons, gets activated by the serine protease HTRA2 upon stress and plays a pivotal role in DA neuronal degeneration by mediating microglial activation and alpha-synuclein/SNCA cleavage. In addition, plays a role in immune response and possesses antiviral activity against various viruses. Mechanistically, translocates from the cytoplasm into the cell nucleus upon virus infection to influence NF-kappa-B activities. The polypeptide is Stromelysin-1 (Mmp3) (Mus musculus (Mouse)).